The following is an 82-amino-acid chain: Penaeidin-3e (82 aa).

The signal sequence occupies residues Met1–Gly19. The residue at position 20 (Gln20) is a Pyrrolidone carboxylic acid. Intrachain disulfides connect Cys51/Cys66, Cys55/Cys73, and Cys67/Cys74. Ser81 carries the post-translational modification Serine amide.

It belongs to the penaeidin family.

It localises to the cytoplasmic granule. Its function is as follows. Antibacterial and antifungal activity. Presents chitin-binding activity. In Penaeus vannamei (Whiteleg shrimp), this protein is Penaeidin-3e.